A 311-amino-acid chain; its full sequence is ATP synthase subunit a (311 aa).

6 helical membrane passes run 62-82, 123-143, 179-199, 213-233, 253-273, and 276-296; these read AVHV…GFFM, VAPM…MDLI, VTVF…WGFI, FWYF…VALI, IFIL…LGGI, and FGWA…FMVL.

It belongs to the ATPase A chain family. In terms of assembly, F-type ATPases have 2 components, CF(1) - the catalytic core - and CF(0) - the membrane proton channel. CF(1) has five subunits: alpha(3), beta(3), gamma(1), delta(1), epsilon(1). CF(0) has three main subunits: a(1), b(2) and c(9-12). The alpha and beta chains form an alternating ring which encloses part of the gamma chain. CF(1) is attached to CF(0) by a central stalk formed by the gamma and epsilon chains, while a peripheral stalk is formed by the delta and b chains.

Its subcellular location is the cell inner membrane. Key component of the proton channel; it plays a direct role in the translocation of protons across the membrane. In Teredinibacter turnerae (strain ATCC 39867 / T7901), this protein is ATP synthase subunit a.